A 342-amino-acid polypeptide reads, in one-letter code: Deoxyguanosinetriphosphate triphosphohydrolase-like protein (342 aa).

An HD domain is found at 75-190; sequence RLVHTLEVSQ…VRFADKIAYV (116 aa).

Belongs to the dGTPase family. Type 2 subfamily.

The chain is Deoxyguanosinetriphosphate triphosphohydrolase-like protein from Clostridium perfringens (strain 13 / Type A).